A 249-amino-acid chain; its full sequence is Pyridoxamine 5'-phosphate oxidase family protein ustO (249 aa).

21–24 (LFFV) lines the substrate pocket. FMN-binding positions include 76–81 (ATVMFC), 91–92 (RL), R105, and 163–164 (RL). Residue 215 to 217 (ASY) coordinates substrate. The helical transmembrane segment at 227–247 (TGMALMFLVMVVAQWVGYVLY) threads the bilayer.

The protein belongs to the pyridoxamine 5'-phosphate oxidase family. Requires FMN as cofactor.

It is found in the membrane. It functions in the pathway mycotoxin biosynthesis. In terms of biological role, pyridoxamine 5'-phosphate oxidase family protein; part of the gene cluster that mediates the biosynthesis of the secondary metabolite ustiloxin B, an antimitotic tetrapeptide. First, ustA is processed by the subtilisin-like endoprotease Kex2 that is outside the ustiloxin B gene cluster, at the C-terminal side of Arg-Lys, after transfer to Golgi apparatus through the endoplasmic reticulum (ER). Cleavage by KEX2 generates 16 peptides YAIG-I to YAIG-XVI. To process the precursor peptide further, at least two peptidases are necessary to cleave the N-terminal and C-terminal sides of the Tyr-Ala-Ile-Gly core peptide which serves as backbone for the synthesis of ustiloxin B, through cyclization and modification of the tyrosine with a non-protein coding amino acid, norvaline. One of the two peptidases must be the serine peptidase ustP; and the other pepdidase is probably ustH. Macrocyclization of the core peptide derived from ustA requires the tyrosinase ustQ, as well as the homologous oxidases ustYa and ustYb, and leads to the production of the first cyclization product N-desmethylustiloxin F. For the formation of N-desmethylustiloxin F, three oxidation steps are required, hydroxylation at the benzylic position, hydroxylation at either the aromatic ring of Tyr or beta-position of Ile, and oxidative cyclization. UstQ may catalyze the oxidation of a phenol moiety, whereas the ustYa and ustYb are most likely responsible for the remaining two-step oxidations. N-desmethylustiloxin F is then methylated by ustM to yield ustiloxin F which in turn substrate of the cytochrome P450 monooxygenase ustC which catalyzes the formation of S-deoxyustiloxin H. The flavoprotein monooxygenases ustF1 and ustF2 then participate in the modification of the side chain of S-deoxyustiloxin H, leading to the synthesis of an oxime intermediate, via ustiloxin H. Finally, carboxylative dehydration performed by the cysteine desulfurase-like protein ustD yields ustiloxin B. This is Pyridoxamine 5'-phosphate oxidase family protein ustO from Aspergillus flavus (strain ATCC 200026 / FGSC A1120 / IAM 13836 / NRRL 3357 / JCM 12722 / SRRC 167).